The following is a 469-amino-acid chain: ATP synthase subunit beta (469 aa).

153 to 160 (GGAGVGKT) contributes to the ATP binding site.

The protein belongs to the ATPase alpha/beta chains family. As to quaternary structure, F-type ATPases have 2 components, CF(1) - the catalytic core - and CF(0) - the membrane proton channel. CF(1) has five subunits: alpha(3), beta(3), gamma(1), delta(1), epsilon(1). CF(0) has three main subunits: a(1), b(2) and c(9-12). The alpha and beta chains form an alternating ring which encloses part of the gamma chain. CF(1) is attached to CF(0) by a central stalk formed by the gamma and epsilon chains, while a peripheral stalk is formed by the delta and b chains.

It localises to the cell membrane. It carries out the reaction ATP + H2O + 4 H(+)(in) = ADP + phosphate + 5 H(+)(out). Produces ATP from ADP in the presence of a proton gradient across the membrane. The catalytic sites are hosted primarily by the beta subunits. The polypeptide is ATP synthase subunit beta (Pediococcus pentosaceus (strain ATCC 25745 / CCUG 21536 / LMG 10740 / 183-1w)).